Here is a 317-residue protein sequence, read N- to C-terminus: Methionyl-tRNA formyltransferase (317 aa).

A (6S)-5,6,7,8-tetrahydrofolate-binding site is contributed by 110-113; it reads SLLP.

It belongs to the Fmt family.

It catalyses the reaction L-methionyl-tRNA(fMet) + (6R)-10-formyltetrahydrofolate = N-formyl-L-methionyl-tRNA(fMet) + (6S)-5,6,7,8-tetrahydrofolate + H(+). Functionally, attaches a formyl group to the free amino group of methionyl-tRNA(fMet). The formyl group appears to play a dual role in the initiator identity of N-formylmethionyl-tRNA by promoting its recognition by IF2 and preventing the misappropriation of this tRNA by the elongation apparatus. The sequence is that of Methionyl-tRNA formyltransferase from Bacillus subtilis (strain 168).